The sequence spans 144 residues: Large ribosomal subunit protein uL16 (144 aa).

Belongs to the universal ribosomal protein uL16 family. In terms of assembly, part of the 50S ribosomal subunit.

Functionally, binds 23S rRNA and is also seen to make contacts with the A and possibly P site tRNAs. The protein is Large ribosomal subunit protein uL16 of Clostridium beijerinckii (strain ATCC 51743 / NCIMB 8052) (Clostridium acetobutylicum).